The sequence spans 371 residues: Trans-enoyl reductase calK (371 aa).

51–54 provides a ligand contact to NADP(+); the sequence is NDHK. 145–152 contacts substrate; that stretch reads WSTISLAF. NADP(+) contacts are provided by residues 181–184, 204–207, Y222, and 269–270; these read GTAS, SNQS, and LE. 289–293 is a substrate binding site; sequence GFQVL. 359–360 provides a ligand contact to NADP(+); that stretch reads VR.

This sequence belongs to the zinc-containing alcohol dehydrogenase family. As to quaternary structure, monomer.

It functions in the pathway secondary metabolite biosynthesis. Its function is as follows. Trans-enoyl reductase; part of the gene cluster that mediates the biosynthesis of calbistrin A and related compounds. Calbistrin A is a secondary metabolite with an interesting structure that was recently found to have bioactivity against leukemia cells. It consists of two polyketides linked by an ester bond: a bicyclic decalin containing polyketide and a linear 12 carbon dioic acid structure. The polyketide synthase calA is probably responsible for forming the decalin moiety. Because calA lacks a designated enoylreductase (ER) domain, the required activity is provided by the trans-enoyl reductase calK. Following release from the PKS, calF then probably catalyzes the oxidation and the subsequent Diels Alder cycloisomerization that lead to the formation of the decalin moiety. The decalin polyketide backbone includes two C-methyl groups, at C7 and C11 in backbone, of which the C7 position is probably methylated by the methyltransferase domain of calA. A candidate for adding the methyl group at C11, if not done by CalA, is the cluster methyltransferase calH. Several additional tailoring enzymes within the cluster could be involved in the modification of the decalin polyketide product. Those include the 3 cytochrome P450 monooxygenases CalE, CalG and CalL, of which one might be responsible for the introduction of the extra hydroxyl group attached to the backbone of the decalin moiety, at position C9 in the backbone, that allows for attachment of the linear moiety. One tailoring enzyme activity that is expected to be involved in biosynthesis of calbistrin is an acyltransferase for connecting the two polyketide synthase products, and which could be performed by the cluster acyltransferase calJ. The enzyme responsible for the biosynthesis of the linear moiety, probably a second PKS, has not been identified yet. This is Trans-enoyl reductase calK from Penicillium decumbens.